A 70-amino-acid polypeptide reads, in one-letter code: U-actitoxin-Ael2c (70 aa).

A signal peptide spans 1–21 (SYQRFLFLVVVASLIATSLAI). Positions 22-26 (PKDLE) are excised as a propeptide. Intrachain disulfides connect C32–C65, C34–C58, and C48–C66.

This sequence belongs to the sea anemone type 3 (BDS) potassium channel toxin family.

It is found in the secreted. The protein localises to the nematocyst. Its function is as follows. Potently and selectively inhibits voltage-gated potassium channels Kv11/KCNH/ERG. Acts as a gating-modifier toxin that shifts the voltage-dependence of ERG activation in the positive direction and suppresses its current amplitudes elicited by strong depolarizing pulses that maximally activate the channels. In Anthopleura elegantissima (Green aggregating anemone), this protein is U-actitoxin-Ael2c.